Here is a 123-residue protein sequence, read N- to C-terminus: Small ribosomal subunit protein uS12 (123 aa).

A disordered region spans residues 1-21 (MPTIEQLVRKGRQAKPKKSKT). Positions 9–20 (RKGRQAKPKKSK) are enriched in basic residues. Aspartate 89 bears the 3-methylthioaspartic acid mark.

Belongs to the universal ribosomal protein uS12 family. In terms of assembly, part of the 30S ribosomal subunit. Contacts proteins S8 and S17. May interact with IF1 in the 30S initiation complex.

With S4 and S5 plays an important role in translational accuracy. Functionally, interacts with and stabilizes bases of the 16S rRNA that are involved in tRNA selection in the A site and with the mRNA backbone. Located at the interface of the 30S and 50S subunits, it traverses the body of the 30S subunit contacting proteins on the other side and probably holding the rRNA structure together. The combined cluster of proteins S8, S12 and S17 appears to hold together the shoulder and platform of the 30S subunit. This chain is Small ribosomal subunit protein uS12, found in Bifidobacterium longum subsp. infantis (strain ATCC 15697 / DSM 20088 / JCM 1222 / NCTC 11817 / S12).